We begin with the raw amino-acid sequence, 242 residues long: DNA repair protein RecO (242 aa).

This sequence belongs to the RecO family. As to quaternary structure, monomer.

Functionally, involved in DNA repair and RecF pathway recombination. In Shigella boydii serotype 18 (strain CDC 3083-94 / BS512), this protein is DNA repair protein RecO.